The following is a 159-amino-acid chain: Nucleotide-binding protein PLES_47741 (159 aa).

The protein belongs to the YajQ family.

Functionally, nucleotide-binding protein. The chain is Nucleotide-binding protein PLES_47741 from Pseudomonas aeruginosa (strain LESB58).